Here is a 160-residue protein sequence, read N- to C-terminus: Probable transcriptional regulator YgiV (160 aa).

In terms of biological role, represses expression of mcbR. In Escherichia coli (strain K12), this protein is Probable transcriptional regulator YgiV (ygiV).